The primary structure comprises 105 residues: Translation initiation factor 1A 2 (105 aa).

The disordered stretch occupies residues 1–22 (MRKRREGSAAPSTQEVTRVRTP). Residues 17–91 (TRVRTPRKEN…TKADVIWKYT (75 aa)) enclose the S1-like domain.

Belongs to the eIF-1A family.

Seems to be required for maximal rate of protein biosynthesis. Enhances ribosome dissociation into subunits and stabilizes the binding of the initiator Met-tRNA(I) to 40 S ribosomal subunits. The chain is Translation initiation factor 1A 2 (eIF1A2) from Methanosarcina acetivorans (strain ATCC 35395 / DSM 2834 / JCM 12185 / C2A).